Reading from the N-terminus, the 105-residue chain is Large ribosomal subunit protein bL21 (105 aa).

This sequence belongs to the bacterial ribosomal protein bL21 family. Part of the 50S ribosomal subunit. Contacts protein L20.

This protein binds to 23S rRNA in the presence of protein L20. This chain is Large ribosomal subunit protein bL21, found in Methylobacterium sp. (strain 4-46).